Consider the following 566-residue polypeptide: DNA ligase B (566 aa).

K125 serves as the catalytic N6-AMP-lysine intermediate.

It belongs to the NAD-dependent DNA ligase family. LigB subfamily.

The enzyme catalyses NAD(+) + (deoxyribonucleotide)n-3'-hydroxyl + 5'-phospho-(deoxyribonucleotide)m = (deoxyribonucleotide)n+m + AMP + beta-nicotinamide D-nucleotide.. Its function is as follows. Catalyzes the formation of phosphodiester linkages between 5'-phosphoryl and 3'-hydroxyl groups in double-stranded DNA using NAD as a coenzyme and as the energy source for the reaction. In Pseudomonas putida (strain ATCC 700007 / DSM 6899 / JCM 31910 / BCRC 17059 / LMG 24140 / F1), this protein is DNA ligase B.